The sequence spans 963 residues: Integrator complex subunit 4 (963 aa).

N6-acetyllysine is present on Lys-26. HEAT repeat units lie at residues 66 to 105 (AESVEGVVRILLEHYYKENDPSVRLKIASLLGLLSKTAGF), 145 to 183 (QAIQMRLVDVACKHLTDTSHGVRNKCLQLLGNLGSLEKS), 190 to 228 (GLAARDVQKIIGDYFSDQDPRVRTAAIKAMLQLHERGLK), 229 to 263 (LHQTIYNQACKLLSDDYEQVRSAAVQLIWVVSQLY), 277 to 313 (IRLVDDAFGKICHMVSDGSWVVRVQAAKLLGSMEQVS), 369 to 405 (NLIESGACGAFVHGLEDEMYEVRIAAVEALCMLAQSS), 406 to 444 (PSFAEKCLDFLVDMFNDEIEEVRLQSIHTMRKISNNITL), and 446 to 484 (EDQLDTVLAVLEDSSRDIREALHELLCCTNVSTKEGIHL). Lys-791 is covalently cross-linked (Glycyl lysine isopeptide (Lys-Gly) (interchain with G-Cter in SUMO1); alternate). Lys-791 is covalently cross-linked (Glycyl lysine isopeptide (Lys-Gly) (interchain with G-Cter in SUMO2); alternate).

This sequence belongs to the Integrator subunit 4 family. As to quaternary structure, component of the Integrator complex, composed of core subunits INTS1, INTS2, INTS3, INTS4, INTS5, INTS6, INTS7, INTS8, INTS9/RC74, INTS10, INTS11/CPSF3L, INTS12, INTS13, INTS14 and INTS15. The core complex associates with protein phosphatase 2A subunits PPP2CA and PPP2R1A, to form the Integrator-PP2A (INTAC) complex. INTS4 is part of the RNA endonuclease subcomplex, composed of INTS4, INTS9, INTS11 and inositol hexakisphosphate (InsP6). Interacts with BRAT1; interaction is required for the assembly of the RNA endonuclease subcomplex.

It localises to the nucleus. The protein resides in the cytoplasm. In terms of biological role, component of the integrator complex, a multiprotein complex that terminates RNA polymerase II (Pol II) transcription in the promoter-proximal region of genes. The integrator complex provides a quality checkpoint during transcription elongation by driving premature transcription termination of transcripts that are unfavorably configured for transcriptional elongation: the complex terminates transcription by (1) catalyzing dephosphorylation of the C-terminal domain (CTD) of Pol II subunit POLR2A/RPB1 and SUPT5H/SPT5, (2) degrading the exiting nascent RNA transcript via endonuclease activity and (3) promoting the release of Pol II from bound DNA. The integrator complex is also involved in terminating the synthesis of non-coding Pol II transcripts, such as enhancer RNAs (eRNAs), small nuclear RNAs (snRNAs), telomerase RNAs and long non-coding RNAs (lncRNAs). Within the integrator complex, INTS4 acts as an scaffold that links INTS9 and INTS11. Mediates recruitment of cytoplasmic dynein to the nuclear envelope, probably as component of the integrator complex. This chain is Integrator complex subunit 4, found in Homo sapiens (Human).